The primary structure comprises 239 residues: Phosphoribosylaminoimidazole-succinocarboxamide synthase (239 aa).

The protein belongs to the SAICAR synthetase family.

The enzyme catalyses 5-amino-1-(5-phospho-D-ribosyl)imidazole-4-carboxylate + L-aspartate + ATP = (2S)-2-[5-amino-1-(5-phospho-beta-D-ribosyl)imidazole-4-carboxamido]succinate + ADP + phosphate + 2 H(+). It functions in the pathway purine metabolism; IMP biosynthesis via de novo pathway; 5-amino-1-(5-phospho-D-ribosyl)imidazole-4-carboxamide from 5-amino-1-(5-phospho-D-ribosyl)imidazole-4-carboxylate: step 1/2. The sequence is that of Phosphoribosylaminoimidazole-succinocarboxamide synthase from Psychrobacter sp. (strain PRwf-1).